Consider the following 408-residue polypeptide: Probable E3 ubiquitin-protein ligase makorin-1 (408 aa).

2 C3H1-type zinc fingers span residues Trp34–Ala61 and Ser63–Pro90. Disordered stretches follow at residues Pro90–Ile114 and Glu154–Pro173. Positions Lys162–Pro173 are enriched in basic and acidic residues. Residues Glu174–Pro201 form a C3H1-type 3 zinc finger. Residues Cys202 to His229 are makorin-type Cys-His. The RING-type zinc-finger motif lies at Cys247–Arg301. A C3H1-type 4 zinc finger spans residues Ala330–Pro359. A disordered region spans residues Ile363 to Leu408.

It carries out the reaction S-ubiquitinyl-[E2 ubiquitin-conjugating enzyme]-L-cysteine + [acceptor protein]-L-lysine = [E2 ubiquitin-conjugating enzyme]-L-cysteine + N(6)-ubiquitinyl-[acceptor protein]-L-lysine.. The protein operates within protein modification; protein ubiquitination. E3 ubiquitin ligase catalyzing the covalent attachment of ubiquitin moieties onto substrate proteins. This Xenopus laevis (African clawed frog) protein is Probable E3 ubiquitin-protein ligase makorin-1 (mkrn1).